The chain runs to 370 residues: Aspartate-semialdehyde dehydrogenase 1 (370 aa).

Residues 9–12 (RGMV), 36–37 (TS), and Gln-72 each bind NADP(+). Position 101 (Arg-101) interacts with phosphate. Cys-134 acts as the Acyl-thioester intermediate in catalysis. Position 134 is an S-cysteinyl cysteine; in inhibited form (Cys-134). Gln-161 contributes to the substrate binding site. Residues 164–165 (SG) and Pro-192 each bind NADP(+). Position 240 (Glu-240) interacts with substrate. Position 243 (Lys-243) interacts with phosphate. Position 267 (Arg-267) interacts with substrate. The Proton acceptor role is filled by His-274. An NADP(+)-binding site is contributed by Gln-350.

Belongs to the aspartate-semialdehyde dehydrogenase family. Homodimer.

The enzyme catalyses L-aspartate 4-semialdehyde + phosphate + NADP(+) = 4-phospho-L-aspartate + NADPH + H(+). The protein operates within amino-acid biosynthesis; L-lysine biosynthesis via DAP pathway; (S)-tetrahydrodipicolinate from L-aspartate: step 2/4. It functions in the pathway amino-acid biosynthesis; L-methionine biosynthesis via de novo pathway; L-homoserine from L-aspartate: step 2/3. Its pathway is amino-acid biosynthesis; L-threonine biosynthesis; L-threonine from L-aspartate: step 2/5. With respect to regulation, inhibited by S-methyl-L-cysteine sulfoxide in vitro, via the formation of a covalently bound cysteine at the active site Cys-134. Functionally, catalyzes the NADPH-dependent formation of L-aspartate-semialdehyde (L-ASA) by the reductive dephosphorylation of L-aspartyl-4-phosphate. This chain is Aspartate-semialdehyde dehydrogenase 1 (asd1), found in Vibrio cholerae serotype O1 (strain ATCC 39315 / El Tor Inaba N16961).